Reading from the N-terminus, the 361-residue chain is UPF0283 membrane protein mlr0776 (361 aa).

Positions 1-33 (MTAPRKPAAFRIEPEAAPTQETPKARQAELSRK) are disordered. Residues 23–32 (PKARQAELSR) are compositionally biased toward basic and acidic residues. The next 2 membrane-spanning stretches (helical) occupy residues 73 to 93 (LFGS…VGLW) and 108 to 128 (LGWL…VILI).

Belongs to the UPF0283 family.

The protein resides in the cell inner membrane. This is UPF0283 membrane protein mlr0776 from Mesorhizobium japonicum (strain LMG 29417 / CECT 9101 / MAFF 303099) (Mesorhizobium loti (strain MAFF 303099)).